A 224-amino-acid chain; its full sequence is MIDVLFLPEPVSQQHVCVVVDVLRATSTIVTALANGARCVVPVRKIAEAKKRKAENILICGERKGIKPKGFDLGNSPIEYFTVKDKEVILTTTNGTRAISMINSQKLYAACFLNLHAVIEQLRNHDHVTIVCSGQKGKIAYEDVLCAGAIVYELNDKLTDGARISRELWKQSRRKDLSKLLFESQHAQELAEYGFSSDITFCSQTDLYSIVPVFVEDRFIKQAP.

The protein belongs to the ComB family. Requires Mg(2+) as cofactor.

It carries out the reaction (2R)-O-phospho-3-sulfolactate + H2O = (2R)-3-sulfolactate + phosphate. This chain is Probable 2-phosphosulfolactate phosphatase, found in Pseudothermotoga lettingae (strain ATCC BAA-301 / DSM 14385 / NBRC 107922 / TMO) (Thermotoga lettingae).